Consider the following 427-residue polypeptide: POU domain protein CF1A (427 aa).

4 disordered regions span residues 39-77, 196-217, 288-309, and 390-427; these read YMQH…GLGS, HHHM…TPTS, TTGS…KKRT, and HDMH…LAAH. Residues 49-66 show a composition bias toward low complexity; that stretch reads AAAAAAHHQLPSSPSPNG. Positions 67–77 are enriched in gly residues; it reads QGNGGGLGLGS. The 75-residue stretch at 212–286 folds into the POU-specific domain; it reads EDTPTSDDLE…LLQKWLEEAD (75 aa). The segment at residues 304 to 363 is a DNA-binding region (homeobox); the sequence is KRKKRTSIEVSVKGALEQHFHKQPKPSAQEITSLADSLQLEKEVVRVWFCNRRQKEKRMT.

This sequence belongs to the POU transcription factor family. Class-3 subfamily. As to expression, coexpressed with acj6 in overlapping subsets of neurons in the embryonic epidermis and central nervous system. First detected in the precursor of the tracheal pits and the stomodeal invagination and later in the peripheral nervous system.

It localises to the nucleus. Its function is as follows. Binds to a DNA sequence element required for the expression of the dopa decarboxylase gene (Ddc) in specific dopaminergic neurons. Could also play an early role in specific ectodermal cells, and a subsequent role in the embryonic nervous system. In Drosophila melanogaster (Fruit fly), this protein is POU domain protein CF1A (vvl).